The following is a 303-amino-acid chain: Dehydrodolichyl diphosphate synthase 1 (303 aa).

A helical membrane pass occupies residues 14–34; the sequence is LLFLFLIPCLFITSYIGFPVF.

This sequence belongs to the UPP synthase family. It depends on Mg(2+) as a cofactor. As to expression, expressed in low levels in the whole plant. Preferentially expressed in roots.

The protein resides in the endoplasmic reticulum membrane. It catalyses the reaction n isopentenyl diphosphate + (2E,6E)-farnesyl diphosphate = a di-trans,poly-cis-polyprenyl diphosphate + n diphosphate. The protein operates within protein modification; protein glycosylation. Its function is as follows. Catalyzes cis-prenyl chain elongation to produce the polyprenyl backbone of dolichol, a glycosyl carrier-lipid required for the biosynthesis of several classes of glycoprotein. This Arabidopsis thaliana (Mouse-ear cress) protein is Dehydrodolichyl diphosphate synthase 1 (DPS).